Here is a 360-residue protein sequence, read N- to C-terminus: U7 snRNA-associated Sm-like protein LSm11 (360 aa).

The disordered stretch occupies residues 1–29 (MEERERGARSAGAGSPARPPSPRLDVSSD). Phosphoserine occurs at positions 15 and 21. Omega-N-methylarginine is present on arginine 41. Positions 68-143 (RGGGRGRGRA…PGRSRKAPRN (76 aa)) are disordered. The span at 78–94 (RGAAAGSGVPAAPGPSG) shows a compositional bias: low complexity. Residue lysine 120 forms a Glycyl lysine isopeptide (Lys-Gly) (interchain with G-Cter in SUMO2) linkage. Position 154 is a phosphoserine (serine 154). Residues 154–229 (SPLGELHRCI…LTLTRLFDRL (76 aa)) form the Sm domain. The segment at 171–204 (VHIRTFKGLRGVCTGFLVAFDKFWNMALTDVDET) is SM 1. Positions 268 to 333 (ADTGRGSHKR…SRKKKRKPKV (66 aa)) are disordered. Serine 280 carries the post-translational modification Phosphoserine. Residues 299–322 (GRTTRTDGSSVGGTFSRATTLSRG) show a composition bias toward polar residues. The interval 343-356 (INQIFIRGENVLLV) is SM 2.

It belongs to the snRNP Sm proteins family. In terms of assembly, component of the heptameric ring U7 snRNP complex, or U7 Sm protein core complex, at least composed of LSM10, LSM11, SNRPB, SNRPD3, SNRPE, SNRPF, SNRPG and U7 snRNA. Formation of the U7 snRNP is an ATP-dependent process mediated by a specialized SMN complex containing at least the Sm protein core complex and additionally, the U7-specific LSM10 and LSM11 proteins. Identified in a histone pre-mRNA complex, at least composed of ERI1, LSM11, SLBP, SNRPB, SYNCRIP and YBX1. Interacts (via the Sm domains) with CLNS1A. Interacts with SMN and ZNF473. Interacts with PRMT5 and WDR77.

It is found in the nucleus. Functionally, component of the U7 snRNP complex that is involved in the histone 3'-end pre-mRNA processing. Increases U7 snRNA levels but not histone 3'-end pre-mRNA processing activity, when overexpressed. Required for cell cycle progression from G1 to S phases. Binds specifically to the Sm-binding site of U7 snRNA. The protein is U7 snRNA-associated Sm-like protein LSm11 of Homo sapiens (Human).